The chain runs to 453 residues: Gamma-aminobutyric acid receptor subunit alpha-6 (453 aa).

The N-terminal stretch at 1 to 19 (MASSLPWLCIILWLENALG) is a signal peptide. At 20-243 (KLEVEGNFYS…FHLQRKMGYF (224 aa)) the chain is on the extracellular side. Asn31 is a glycosylation site (N-linked (GlcNAc...) asparagine). Arg84 serves as a coordination point for 4-aminobutanoate. N-linked (GlcNAc...) asparagine glycosylation is found at Asn128 and Asn141. Thr147 serves as a coordination point for 4-aminobutanoate. Residues Cys156 and Cys170 are joined by a disulfide bond. Residues 244–264 (MIQIYTPCIMTVILSQVSFWI) traverse the membrane as a helical segment. Topologically, residues 265-270 (NKESVP) are cytoplasmic. A helical transmembrane segment spans residues 271 to 290 (ARTVFGITTVLTMTTLSISA). At 291–304 (RHSLPKVSYATAMD) the chain is on the extracellular side. A helical transmembrane segment spans residues 305–325 (WFIAVCFAFVFSALIEFAAVN). At 326-422 (YFTNLQTQKA…GTSKIDQYSR (97 aa)) the chain is on the cytoplasmic side. Thr403 is subject to Phosphothreonine. Residues 423 to 443 (ILFPVAFAGFNLVYWVVYLSK) traverse the membrane as a helical segment. Residues 444 to 453 (DTMEVSSSVE) are Extracellular-facing.

The protein belongs to the ligand-gated ion channel (TC 1.A.9) family. Gamma-aminobutyric acid receptor (TC 1.A.9.5) subfamily. GABRA6 sub-subfamily. In terms of assembly, heteropentamer, formed by a combination of alpha (GABRA1-6), beta (GABRB1-3), gamma (GABRG1-3), delta (GABRD), epsilon (GABRE), rho (GABRR1-3), pi (GABRP) and theta (GABRQ) chains, each subunit exhibiting distinct physiological and pharmacological properties. Binds UBQLN1. In terms of tissue distribution, expressed in brain, in cerebellar granule cells.

It is found in the postsynaptic cell membrane. It localises to the cell membrane. It carries out the reaction chloride(in) = chloride(out). Functionally, alpha subunit of the heteropentameric ligand-gated chloride channel gated by gamma-aminobutyric acid (GABA), a major inhibitory neurotransmitter in the brain. GABA-gated chloride channels, also named GABA(A) receptors (GABAAR), consist of five subunits arranged around a central pore and contain GABA active binding site(s) located at the alpha and beta subunit interface(s). When activated by GABA, GABAARs selectively allow the flow of chloride anions across the cell membrane down their electrochemical gradient. Alpha-6/GABRA6 subunits are found at both synaptic and extrasynaptic sites. Chloride influx into the postsynaptic neuron following GABAAR opening decreases the neuron ability to generate a new action potential, thereby reducing nerve transmission. Extrasynaptic alpha-6-containing receptors contribute to the tonic GABAergic inhibition. Alpha-6 subunits are also present on glutamatergic synapses. The sequence is that of Gamma-aminobutyric acid receptor subunit alpha-6 from Homo sapiens (Human).